Reading from the N-terminus, the 709-residue chain is ATP-binding cassette sub-family F member 3 (709 aa).

Position 2 is an N-acetylalanine (A2). S83 is subject to Phosphoserine. Over residues 129–143 the composition is skewed to basic and acidic residues; sequence RLKAKQEKRSEKDTL. The tract at residues 129–171 is disordered; it reads RLKAKQEKRSEKDTLKTSNPLVLEEASASQAGSRKESRLESSG. Residues S155, S157, and S161 each carry the phosphoserine modification. A compositionally biased stretch (basic and acidic residues) spans 161–171; the sequence is SRKESRLESSG. ABC transporter domains are found at residues 178 to 424 and 492 to 707; these read VRIE…LNQQ and LQLD…RREG. An ATP-binding site is contributed by 210–217; it reads GRNGLGKT. S283 bears the Phosphoserine mark. 525 to 532 contributes to the ATP binding site; the sequence is GENGAGKS.

It belongs to the ABC transporter superfamily. ABCF family. EF3 subfamily.

Functionally, displays an antiviral effect against flaviviruses such as west Nile virus (WNV) in the presence of OAS1B. This chain is ATP-binding cassette sub-family F member 3 (ABCF3), found in Homo sapiens (Human).